The sequence spans 572 residues: MADEIVPPATQLAAVSLENDGSTVQRAQFSNRVLIRTILDRPDGGAGLAGQTVRIGGWVKSGRDQGKRTFSFLAVNDGSCPANLQVMVDPSLYDVSNLVATGTCVTVDGVLKVPPKGKGTQQQIELNVVKVIDVGTVDASKYPLPKTKLTLETLRDVLHLRSRTNSISAVARIRNALAFATHSFFQEHSFLYIHTPIITTSDCEGAGEMFQATTLINYTERLEQDLIDNPPPTEADVEAARLIVIERGNVVAELKAAKASKEAITAAVAELKIAKETFAHIDERSRLRPGLPKKDGNIDYSKDFFGRQAFLTVSGQLQVETYACALSNVYTFGPTFRAENSHTSRHLAEFWMVEPEIAFADLEDDMNCAEAYVKYMCNWLLEKCYADMELMAKNFDSGCIDRLKLVASTPFGRITYTKAIELLEEAVAKGKEFDNNVEWGIDLASEHERYLTEVLFQKPLIVYNYPKGIKAFYMRLNDDEKTVAAMDVLVPKVGELIGGSQREERYDVIKKRIEEMGLPIEPYEWYLDLRRYGTVKHCGFGLGFERMILFATGLDNIRDVIPFPRYPGKADL.

Alanine 2 carries the N-acetylalanine modification. Residues 53-131 constitute a DNA-binding region (OB); that stretch reads VRIGGWVKSG…QQIELNVVKV (79 aa). The WHEP-TRS domain maps to 236 to 292; that stretch reads DVEAARLIVIERGNVVAELKAAKASKEAITAAVAELKIAKETFAHIDERSRLRPGLP.

Belongs to the class-II aminoacyl-tRNA synthetase family.

It localises to the cytoplasm. It is found in the cytosol. The catalysed reaction is tRNA(Asn) + L-asparagine + ATP = L-asparaginyl-tRNA(Asn) + AMP + diphosphate + H(+). The sequence is that of Asparagine--tRNA ligase, cytoplasmic 1 from Arabidopsis thaliana (Mouse-ear cress).